A 182-amino-acid chain; its full sequence is Regulatory protein RecX (182 aa).

Residues 12-54 form a disordered region; the sequence is LSQRDHSESELRRKLAAPPFSAKGNWGKRSGAKSSNLVESNPV. The span at 13-24 shows a compositional bias: basic and acidic residues; that stretch reads SQRDHSESELRR. The span at 43–54 shows a compositional bias: polar residues; it reads AKSSNLVESNPV.

The protein belongs to the RecX family.

It is found in the cytoplasm. In terms of biological role, modulates RecA activity. This chain is Regulatory protein RecX, found in Yersinia pseudotuberculosis serotype I (strain IP32953).